A 500-amino-acid chain; its full sequence is Probable cytosol aminopeptidase (500 aa).

Residues Lys265 and Asp270 each coordinate Mn(2+). Residue Lys277 is part of the active site. Residues Asp288, Asp347, and Glu349 each contribute to the Mn(2+) site. Residue Arg351 is part of the active site.

Belongs to the peptidase M17 family. It depends on Mn(2+) as a cofactor.

It is found in the cytoplasm. It carries out the reaction Release of an N-terminal amino acid, Xaa-|-Yaa-, in which Xaa is preferably Leu, but may be other amino acids including Pro although not Arg or Lys, and Yaa may be Pro. Amino acid amides and methyl esters are also readily hydrolyzed, but rates on arylamides are exceedingly low.. It catalyses the reaction Release of an N-terminal amino acid, preferentially leucine, but not glutamic or aspartic acids.. Functionally, presumably involved in the processing and regular turnover of intracellular proteins. Catalyzes the removal of unsubstituted N-terminal amino acids from various peptides. The polypeptide is Probable cytosol aminopeptidase (Rickettsia massiliae (strain Mtu5)).